The sequence spans 514 residues: 2,3-bisphosphoglycerate-independent phosphoglycerate mutase (514 aa).

Mn(2+) contacts are provided by D14 and S64. S64 acts as the Phosphoserine intermediate in catalysis. Residues H125, 155–156 (RD), R187, R193, 263–266 (RADR), and K336 contribute to the substrate site. Residues D403, H407, D444, H445, and H463 each coordinate Mn(2+).

The protein belongs to the BPG-independent phosphoglycerate mutase family. Monomer. Requires Mn(2+) as cofactor.

It catalyses the reaction (2R)-2-phosphoglycerate = (2R)-3-phosphoglycerate. It participates in carbohydrate degradation; glycolysis; pyruvate from D-glyceraldehyde 3-phosphate: step 3/5. Catalyzes the interconversion of 2-phosphoglycerate and 3-phosphoglycerate. In Shigella flexneri, this protein is 2,3-bisphosphoglycerate-independent phosphoglycerate mutase.